The following is a 402-amino-acid chain: Phosphoglycerate kinase (402 aa).

Residues 24 to 26 (DFN), R40, 63 to 66 (HFGR), R122, and R155 each bind substrate. ATP is bound by residues K206, G297, E328, and 358–361 (GGDS).

It belongs to the phosphoglycerate kinase family. Monomer.

It is found in the cytoplasm. It carries out the reaction (2R)-3-phosphoglycerate + ATP = (2R)-3-phospho-glyceroyl phosphate + ADP. It functions in the pathway carbohydrate degradation; glycolysis; pyruvate from D-glyceraldehyde 3-phosphate: step 2/5. This chain is Phosphoglycerate kinase, found in Prochlorococcus marinus (strain MIT 9312).